Reading from the N-terminus, the 110-residue chain is Glycine cleavage system H-like protein (110 aa).

The region spanning 10 to 97 (VEKVGDLYVF…PEENWLFKLD (88 aa)) is the Lipoyl-binding domain. Asp27 is subject to ADP-ribosyl aspartic acid. An N6-lipoyllysine modification is found at Lys56.

As to quaternary structure, lipoylated GcvH-L directly interacts with SAV0325, which reverses the SirTM-mediated mono-ADP-ribosylation of GcvH-L, and with the oxidoreductase SAV0322. Post-translationally, is lipoylated on K-56 by LplA2 (SAV0327) and then mono-ADP-ribosylated, probably on D-27, by SirTM (SAV0326). The mono-ADP-ribosylation state of GcvH-L might regulate the availability of the lipoyl moiety for redox reactions; ADP-ribosylation would inhibit the interaction of the oxidoreductase with GcvH-L when it is not required, thus ADP-ribosylation of GcvH-L might be acting to keep the response 'off' under non-stress conditions.

May act as a carrier protein for the ROS scavenging lipoyl moiety and/or as a substrate for oxidoreductases such as SAV0322 and SAV0323. The polypeptide is Glycine cleavage system H-like protein (Staphylococcus aureus (strain Mu50 / ATCC 700699)).